Reading from the N-terminus, the 285-residue chain is MGTPGEGLGRCSHALIRGVPESLASGEGAAAGLPALDLAKAQREHGVLGGKLRQRLGLQLVELPPEESLPLGPLLGDTAVIQGDTALITRPWSPARRPEVDGVRKALQDLGLRIVEMGDENATLDGTDVLFTGREFFVGLSKWTNHRGAEIVADTFRDFAVSTVPVTSTSHLRGLCGMGGPRTVVAGSSEAAQKAVRAMAVLTDHPYASLTLPDDAAADCLFLRPGQPGLPPFLLHRGGGDLPNSQEALQKLSDVTLVPVSCSELEKAGAGLSSLCLVLSTRPHN.

His-171 (proton donor) is an active-site residue. The active-site Nucleophile is Cys-276.

Belongs to the DDAH family. In terms of processing, phosphorylated by TBK1. Phosphorylation inhibits the translocation into the mitochondrion upon Sendai viral infection.

Its subcellular location is the cytoplasm. The protein resides in the mitochondrion. In terms of biological role, putative hydrolase with unknown substrate. Does not hydrolyze N(G),N(G)-dimethyl-L-arginine (ADMA) which acts as an inhibitor of NOS. In endothelial cells, induces expression of vascular endothelial growth factor (VEGF) via phosphorylation of the transcription factor SP1 by PKA in a process that is independent of NO and NO synthase. Similarly, enhances pancreatic insulin secretion through SP1-mediated transcriptional up-regulation of secretagogin/SCGN, an insulin vesicle docking protein. Upon viral infection, relocates to mitochondria where it promotes mitochondrial fission through activation of DNM1L leading to the inhibition of innate response activation mediated by MAVS. The chain is Putative hydrolase DDAH2 (DDAH2) from Bos taurus (Bovine).